Reading from the N-terminus, the 329-residue chain is Diaminopimelate epimerase (329 aa).

Substrate-binding residues include N14 and N73. C82 acts as the Proton donor in catalysis. Substrate is bound by residues 83 to 84, N170, N206, and 224 to 225; these read GN and ER. The active-site Proton acceptor is C233. 234-235 provides a ligand contact to substrate; the sequence is GT.

The protein belongs to the diaminopimelate epimerase family. As to quaternary structure, homodimer.

The protein localises to the cytoplasm. The enzyme catalyses (2S,6S)-2,6-diaminopimelate = meso-2,6-diaminopimelate. It participates in amino-acid biosynthesis; L-lysine biosynthesis via DAP pathway; DL-2,6-diaminopimelate from LL-2,6-diaminopimelate: step 1/1. In terms of biological role, catalyzes the stereoinversion of LL-2,6-diaminopimelate (L,L-DAP) to meso-diaminopimelate (meso-DAP), a precursor of L-lysine and an essential component of the bacterial peptidoglycan. This is Diaminopimelate epimerase from Listeria monocytogenes serotype 4b (strain CLIP80459).